Reading from the N-terminus, the 311-residue chain is L-lactate dehydrogenase 2 (311 aa).

Residues V14, D35, and R40 each coordinate NAD(+). Residue R90 participates in substrate binding. NAD(+)-binding positions include S103, 120 to 122 (ATN), and T145. 122–125 (NPCD) provides a ligand contact to substrate. 150–153 (DTTR) lines the substrate pocket. H177 (proton acceptor) is an active-site residue. T230 lines the substrate pocket.

Belongs to the LDH/MDH superfamily. LDH family. Homotetramer.

It is found in the cytoplasm. It catalyses the reaction (S)-lactate + NAD(+) = pyruvate + NADH + H(+). It participates in fermentation; pyruvate fermentation to lactate; (S)-lactate from pyruvate: step 1/1. Its function is as follows. Catalyzes the conversion of lactate to pyruvate. This chain is L-lactate dehydrogenase 2, found in Listeria innocua serovar 6a (strain ATCC BAA-680 / CLIP 11262).